We begin with the raw amino-acid sequence, 145 residues long: uncharacterized protein (145 aa).

Over residues 1–18 (MAEQQPSKEEKKEDKKDE) the composition is skewed to basic and acidic residues. Residues 1-61 (MAEQQPSKEE…CTEGEWDASD (61 aa)) form a disordered region.

This is an uncharacterized protein from Caenorhabditis elegans.